The primary structure comprises 54 residues: MNTATETVQLTKFTQVLCSSGSLGIRIRKRNDKEITNYISEIDLKHFKKKFLNS.

This is an uncharacterized protein from Dictyostelium discoideum (Social amoeba).